We begin with the raw amino-acid sequence, 240 residues long: Putative truncated effector protein hopW1-2 (240 aa).

A disordered region spans residues methionine 1–proline 32. Residues threonine 9–serine 23 are compositionally biased toward low complexity.

This sequence belongs to the HopW family.

This Pseudomonas syringae pv. maculicola protein is Putative truncated effector protein hopW1-2 (hopW1-2).